A 525-amino-acid chain; its full sequence is MALDIHAHRILILDFGSQYTQLIARRVREIGVYCELHPFDMDDEAIREFAPKGVILAGGPESVHEANSPRCPQAVFDLGVPVFGICYGMQTMAEQLGGKVEGSELREFGYARVDVVGKSRLLDGIEDHVDADGLFGLDVWMSHGDKVTKMPEDFHILASTPSCPIAGMFNDDLRYYGVQFHPEVTHTKQGGRILSRFILDICGCEALWTPSKIAEDAIAQIRAQVGTDNVLLGLSGGVDSSVVAALLHKAIGDQLTCVFVDNGLLRLHEGEQVMAMFAENMGVKVIRANAEEQFLNNLAGEADPEKKRKIIGRTFIDVFDAESCKLENIKYLAQGTIYPDVIESAGAKSGKAHVIKSHHNVGGLPEEMNLKLVEPLRELFKDEVRRLGLELGLPYDMVYRHPFPGPGLGVRILGEVKKEYADLLRRADHIFIEELRKADWYHKVSQAFVVFQPVKSVGVVGDGRRYAWVVALRAVETIDFMTARWAHLPYELLETVSGRIINEIEGISRVTYDVSSKPPATIEWE.

Residues 9–207 form the Glutamine amidotransferase type-1 domain; that stretch reads RILILDFGSQ…ILDICGCEAL (199 aa). C86 serves as the catalytic Nucleophile. Active-site residues include H181 and E183. The GMPS ATP-PPase domain occupies 208–400; the sequence is WTPSKIAEDA…LGLPYDMVYR (193 aa). 235–241 lines the ATP pocket; it reads SGGVDSS.

Homodimer.

It carries out the reaction XMP + L-glutamine + ATP + H2O = GMP + L-glutamate + AMP + diphosphate + 2 H(+). Its pathway is purine metabolism; GMP biosynthesis; GMP from XMP (L-Gln route): step 1/1. Its function is as follows. Catalyzes the synthesis of GMP from XMP. The protein is GMP synthase [glutamine-hydrolyzing] of Pseudomonas fluorescens (strain ATCC BAA-477 / NRRL B-23932 / Pf-5).